Consider the following 186-residue polypeptide: Lipid A palmitoyltransferase PagP (186 aa).

The N-terminal stretch at 1-25 is a signal peptide; the sequence is MNVSKYVAIFFFVFIQLISVGKVFA. Residues H58, D101, and S102 contribute to the active site.

Belongs to the lipid A palmitoyltransferase family. In terms of assembly, homodimer.

The protein resides in the cell outer membrane. The enzyme catalyses lipid A (E. coli) + a 1-hexadecanoyl-2-acyl-sn-glycero-3-phosphocholine = hepta-acyl lipid A (E. coli) + a 2-acyl-sn-glycero-3-phosphocholine. The catalysed reaction is lipid IIA + a 1-hexadecanoyl-2-acyl-sn-glycero-3-phosphocholine = lipid IIB + a 2-acyl-sn-glycero-3-phosphocholine. It catalyses the reaction lipid IVA (E. coli) + a 1-hexadecanoyl-2-acyl-sn-glycero-3-phosphocholine = lipid IVB (E. coli) + a 2-acyl-sn-glycero-3-phosphocholine. Its function is as follows. Transfers a palmitate residue from the sn-1 position of a phospholipid to the N-linked hydroxymyristate on the proximal unit of lipid A or its precursors. The polypeptide is Lipid A palmitoyltransferase PagP (Escherichia coli O6:H1 (strain CFT073 / ATCC 700928 / UPEC)).